We begin with the raw amino-acid sequence, 311 residues long: ADP-ribosyl cyclase/cyclic ADP-ribose hydrolase 2 (311 aa).

Positions 1–24 are cleaved as a signal peptide; that stretch reads MAVQGGLLSLWLWLWLSLLTVLLG. Intrachain disulfides connect Cys-46–Cys-60, Cys-76–Cys-156, and Cys-137–Cys-150. N-linked (GlcNAc...) asparagine glycosylation is found at Asn-59 and Asn-88. An NAD(+)-binding site is contributed by Trp-102. Trp-102 is a nicotinamide binding site. Asn-141 carries an N-linked (GlcNAc...) asparagine glycan. Trp-165 provides a ligand contact to NAD(+). N-linked (GlcNAc...) asparagine glycosylation is present at Asn-185. Glu-203 is an NAD(+) binding site. 2 cysteine pairs are disulfide-bonded: Cys-231–Cys-252 and Cys-264–Cys-273. Ser-286 is lipidated: GPI-anchor amidated serine. Positions 287-311 are excised as a propeptide; the sequence is ASLHAIGDASLLISLLVALASSSQA.

Belongs to the ADP-ribosyl cyclase family. In terms of assembly, homodimer. In terms of tissue distribution, expressed in the bone marrow, spleen and thymus in lymphoid organs, and the lung, kidney and heart in non-lymphoid organs.

It localises to the cell membrane. The enzyme catalyses NAD(+) + H2O = ADP-D-ribose + nicotinamide + H(+). It catalyses the reaction NAD(+) = cyclic ADP-beta-D-ribose + nicotinamide + H(+). It carries out the reaction cyclic ADP-beta-D-ribose + H2O = ADP-D-ribose. In terms of biological role, catalyzes both the synthesis of cyclic ADP-beta-D-ribose (cADPR) from NAD(+), and its hydrolysis to ADP-D-ribose (ADPR). Cyclic ADPR is known to serve as an endogenous second messenger that elicits calcium release from intracellular stores, and thus regulates the mobilization of intracellular calcium. May be involved in pre-B-cell growth. The protein is ADP-ribosyl cyclase/cyclic ADP-ribose hydrolase 2 (Bst1) of Mus musculus (Mouse).